A 1174-amino-acid chain; its full sequence is Carboxylic acid reductase (1174 aa).

AMP is bound by residues H297, S392, 413 to 414, T418, D491, 503 to 506, K512, and K612; these read EG and YLDR. Residues 651 to 726 form the Carrier domain; sequence APVLVTVCRA…ALADYVEAAR (76 aa). S685 is subject to O-(pantetheine 4'-phosphoryl)serine. Residues 787–791, R814, R824, 854–855, 880–882, 919–920, Y956, and K960 contribute to the NADP(+) site; these read TGFLG, DK, PAA, and TS.

This sequence belongs to the ATP-dependent AMP-binding enzyme family. Carboxylic acid reductase subfamily. Requires pantetheine 4'-phosphate as cofactor.

The enzyme catalyses a carboxylate + ATP + NADPH + H(+) = an aldehyde + AMP + diphosphate + NADP(+). In terms of biological role, catalyzes the ATP- and NADPH-dependent reduction of carboxylic acids to the corresponding aldehydes. Catalyzes the reduction of a wide range of aliphatic fatty acids (C6-C18) into their corresponding aldehydes. Can also reduce benzoate to benzaldehyde. Has a preference for NADPH over NADH as the electron donor. In Mycobacterium marinum (strain ATCC BAA-535 / M), this protein is Carboxylic acid reductase.